Reading from the N-terminus, the 174-residue chain is Streptothricin acetyltransferase (174 aa).

The N-acetyltransferase domain occupies 20–170 (FIVREVFDVH…AMYWYWFSGA (151 aa)).

Belongs to the acetyltransferase family. GNAT subfamily.

The enzyme catalyses streptothricin F + acetyl-CoA = N(beta)-acetylstreptothricin F + CoA + H(+). Functionally, involved in resistance to streptothricin, a broad-spectrum antibiotic produced by streptomycetes. Detoxifies streptothricin via acetylation of the beta amino group of the first beta-lysyl moiety of streptothricin. This Escherichia coli protein is Streptothricin acetyltransferase (sat-1).